Here is a 400-residue protein sequence, read N- to C-terminus: Canavanine gamma-lyase (400 aa).

Lys213 carries the post-translational modification N6-(pyridoxal phosphate)lysine.

This sequence belongs to the trans-sulfuration enzymes family. It depends on pyridoxal 5'-phosphate as a cofactor.

It catalyses the reaction L-canavanine + H2O = N-hydroxyguanidine + L-homoserine. Functionally, lyase involved in the degradation of canavanine, the delta-oxa-analog of arginine, allowing growth on canavanine as sole nitrogen and carbon source. Catalyzes the elimination of hydroxyguanidine from canavanine with a subsequent water addition to yield homoserine. Is highly specific for canavanine and cannot use methionine, cystathionine or arginine. This Pseudomonas canavaninivorans protein is Canavanine gamma-lyase.